Here is a 285-residue protein sequence, read N- to C-terminus: Large ribosomal subunit protein uL2 (285 aa).

The segment at 215–285 (GRSRHKGIRP…IIRNRKGEQY (71 aa)) is disordered. A compositionally biased stretch (basic residues) spans 256–272 (WGKRHMGVKTRNMKKHS).

The protein belongs to the universal ribosomal protein uL2 family. As to quaternary structure, part of the 50S ribosomal subunit. Forms a bridge to the 30S subunit in the 70S ribosome.

Its function is as follows. One of the primary rRNA binding proteins. Required for association of the 30S and 50S subunits to form the 70S ribosome, for tRNA binding and peptide bond formation. It has been suggested to have peptidyltransferase activity; this is somewhat controversial. Makes several contacts with the 16S rRNA in the 70S ribosome. The polypeptide is Large ribosomal subunit protein uL2 (Mycoplasma genitalium (strain ATCC 33530 / DSM 19775 / NCTC 10195 / G37) (Mycoplasmoides genitalium)).